Reading from the N-terminus, the 774-residue chain is RNA exonuclease 5 (774 aa).

Over residues 1–19 the composition is skewed to basic and acidic residues; the sequence is MEPEREGTERHPRKVRESR. The disordered stretch occupies residues 1-22; that stretch reads MEPEREGTERHPRKVRESRQAP. Residues 228–376 enclose the Exonuclease domain; it reads LFGLDCEMCL…EDARTILELA (149 aa). RRM domains follow at residues 505 to 579 and 600 to 679; these read STVY…RPVT and GSIY…RHLH.

The chain is RNA exonuclease 5 from Homo sapiens (Human).